Consider the following 344-residue polypeptide: D-arabinose dehydrogenase [NAD(P)+] heavy chain (344 aa).

Y71 functions as the Proton donor in the catalytic mechanism. Residue H131 coordinates substrate. At T151 the chain carries Phosphothreonine. 241–295 contributes to the NADP(+) binding site; the sequence is SPLGSHGAPNLKIPLVKKLAEKYNVTGNDLLISYHIRQGTIVIPRSLNPVRISSS.

Belongs to the aldo/keto reductase family. In terms of assembly, heterodimer of a heavy chain and a light chain.

Its subcellular location is the cytoplasm. The catalysed reaction is D-arabinose + NADP(+) = D-arabinono-1,4-lactone + NADPH + H(+). The enzyme catalyses D-arabinose + NAD(+) = D-arabinono-1,4-lactone + NADH + H(+). Catalyzes the oxidation of D-arabinose, L-xylose, L-fucose and L-galactose in the presence of NADP(+). This is D-arabinose dehydrogenase [NAD(P)+] heavy chain (ARA1) from Saccharomyces cerevisiae (strain ATCC 204508 / S288c) (Baker's yeast).